The chain runs to 56 residues: Conotoxin Cal6.41a (56 aa).

An N-terminal signal peptide occupies residues 1-23; it reads MSGSGAMLLGLLILVAMATSLDT. 3 disulfide bridges follow: cysteine 27–cysteine 41, cysteine 33–cysteine 50, and cysteine 40–cysteine 54.

Expressed by the venom duct.

The protein localises to the secreted. Functionally, probable neurotoxin. This is Conotoxin Cal6.41a from Californiconus californicus (California cone).